We begin with the raw amino-acid sequence, 285 residues long: NAC domain-containing protein 92 (285 aa).

An NAC domain is found at 20–170 (LPPGFRFHPT…EWVICRVFQK (151 aa)). A DNA-binding region spans residues 117–176 (VGMKKTLVFYKGRAPKGVKTNWVMHEYRLEGKYCIENLPQTAKNEWVICRVFQKRADGTK).

As to quaternary structure, forms homodimers. Interacts with GLK1 and GLK2. Interacts with NLA. Ubiquitinated by NLA. Ubiquitination of NAC92 leads to its degradation by the proteasome during leaf senescence under nitrogen deficiency. As to expression, mostly expressed in roots and flowers, and, to a lower extent, in shoots and leaves. Particularly expressed in old and senescing tissues.

The protein resides in the nucleus. Functionally, transcription activator that binds to DNA in promoters of target genes on a specific bipartite motif 5'-[ACG][CA]GT[AG](5-6n)[CT]AC[AG]-3'. Promotes lateral root development. Triggers the expression of senescence-associated genes during age-, salt- and dark-induced senescence through a regulatory network that may involve cross-talk with salt- and H(2)O(2)-dependent signaling pathways. Also regulates genes during seed germination. Positively regulates aging-induced cell death. Involved in age-related resistance (ARR) against Pseudomonas syringae pv. tomato and Hyaloperonospora arabidopsidis. Antagonizes GLK1 and GLK2 transcriptional activity, shifting the balance from chloroplast maintenance towards deterioration during leaf senescence. Promotes the expression of senescence-associated genes, including ENDO1/BFN1, SWEET15/SAG29 and SINA1/At3g13672, during senescence onset. This is NAC domain-containing protein 92 from Arabidopsis thaliana (Mouse-ear cress).